Here is a 374-residue protein sequence, read N- to C-terminus: Homeobox protein knotted-1-like 13 (374 aa).

Residues 214-242 (TGASPGEGTGATMSDGEDDQADSEANMYD) are disordered. Residues 270–290 (ELKHELKQGYKEKLIDIREEI) enclose the ELK domain. The homeobox; TALE-type DNA-binding region spans 291 to 354 (LRKRRAGKLP…NQRKRNWHSN (64 aa)). The tract at residues 347–374 (RKRNWHSNPSSSTSVKTKRKSNAGDNNS) is disordered.

This sequence belongs to the TALE/KNOX homeobox family. As to expression, isoforms 1 and 2 are expressed in roots, stems, shoot meristem, leaf blades, leaf sheaths and flowers. Isoform 3 is expressed in stems, shoot meristem, rachis, leaf blades and leaf sheaths.

The protein resides in the nucleus. In terms of biological role, isoform 3 acts as a transcription activator, but isoforms 1 and 2 do not. The protein is Homeobox protein knotted-1-like 13 (OSH45) of Oryza sativa subsp. japonica (Rice).